A 254-amino-acid chain; its full sequence is Imidazole glycerol phosphate synthase subunit HisF (254 aa).

Active-site residues include D12 and D131.

The protein belongs to the HisA/HisF family. As to quaternary structure, heterodimer of HisH and HisF.

It is found in the cytoplasm. The catalysed reaction is 5-[(5-phospho-1-deoxy-D-ribulos-1-ylimino)methylamino]-1-(5-phospho-beta-D-ribosyl)imidazole-4-carboxamide + L-glutamine = D-erythro-1-(imidazol-4-yl)glycerol 3-phosphate + 5-amino-1-(5-phospho-beta-D-ribosyl)imidazole-4-carboxamide + L-glutamate + H(+). It participates in amino-acid biosynthesis; L-histidine biosynthesis; L-histidine from 5-phospho-alpha-D-ribose 1-diphosphate: step 5/9. IGPS catalyzes the conversion of PRFAR and glutamine to IGP, AICAR and glutamate. The HisF subunit catalyzes the cyclization activity that produces IGP and AICAR from PRFAR using the ammonia provided by the HisH subunit. The polypeptide is Imidazole glycerol phosphate synthase subunit HisF (Leuconostoc mesenteroides subsp. mesenteroides (strain ATCC 8293 / DSM 20343 / BCRC 11652 / CCM 1803 / JCM 6124 / NCDO 523 / NBRC 100496 / NCIMB 8023 / NCTC 12954 / NRRL B-1118 / 37Y)).